The chain runs to 141 residues: Large ribosomal subunit protein uL11 (141 aa).

It belongs to the universal ribosomal protein uL11 family. Part of the ribosomal stalk of the 50S ribosomal subunit. Interacts with L10 and the large rRNA to form the base of the stalk. L10 forms an elongated spine to which L12 dimers bind in a sequential fashion forming a multimeric L10(L12)X complex. One or more lysine residues are methylated.

Functionally, forms part of the ribosomal stalk which helps the ribosome interact with GTP-bound translation factors. In Prochlorococcus marinus (strain MIT 9313), this protein is Large ribosomal subunit protein uL11.